Reading from the N-terminus, the 1412-residue chain is DNA-directed RNA polymerase subunit beta' (1412 aa).

The Zn(2+) site is built by C70, C72, C85, and C88. D460, D462, and D464 together coordinate Mg(2+). The Zn(2+) site is built by C819, C893, C900, and C903. Residues 1391–1412 (AEESFEFGTPETPAAEQQHSGE) are disordered.

It belongs to the RNA polymerase beta' chain family. In terms of assembly, the RNAP catalytic core consists of 2 alpha, 1 beta, 1 beta' and 1 omega subunit. When a sigma factor is associated with the core the holoenzyme is formed, which can initiate transcription. Mg(2+) is required as a cofactor. The cofactor is Zn(2+).

It catalyses the reaction RNA(n) + a ribonucleoside 5'-triphosphate = RNA(n+1) + diphosphate. DNA-dependent RNA polymerase catalyzes the transcription of DNA into RNA using the four ribonucleoside triphosphates as substrates. This Paraburkholderia xenovorans (strain LB400) protein is DNA-directed RNA polymerase subunit beta'.